Reading from the N-terminus, the 365-residue chain is tRNA 2-selenouridine synthase (365 aa).

Residues 15–138 (LVSDHPIMDA…MRQFLIETID (124 aa)) enclose the Rhodanese domain. C98 acts as the S-selanylcysteine intermediate in catalysis.

The protein belongs to the SelU family. Monomer.

The catalysed reaction is 5-methylaminomethyl-2-thiouridine(34) in tRNA + selenophosphate + (2E)-geranyl diphosphate + H2O + H(+) = 5-methylaminomethyl-2-selenouridine(34) in tRNA + (2E)-thiogeraniol + phosphate + diphosphate. It carries out the reaction 5-methylaminomethyl-2-thiouridine(34) in tRNA + (2E)-geranyl diphosphate = 5-methylaminomethyl-S-(2E)-geranyl-thiouridine(34) in tRNA + diphosphate. It catalyses the reaction 5-methylaminomethyl-S-(2E)-geranyl-thiouridine(34) in tRNA + selenophosphate + H(+) = 5-methylaminomethyl-2-(Se-phospho)selenouridine(34) in tRNA + (2E)-thiogeraniol. The enzyme catalyses 5-methylaminomethyl-2-(Se-phospho)selenouridine(34) in tRNA + H2O = 5-methylaminomethyl-2-selenouridine(34) in tRNA + phosphate. Involved in the post-transcriptional modification of the uridine at the wobble position (U34) of tRNA(Lys), tRNA(Glu) and tRNA(Gln). Catalyzes the conversion of 2-thiouridine (S2U-RNA) to 2-selenouridine (Se2U-RNA). Acts in a two-step process involving geranylation of 2-thiouridine (S2U) to S-geranyl-2-thiouridine (geS2U) and subsequent selenation of the latter derivative to 2-selenouridine (Se2U) in the tRNA chain. This Shewanella piezotolerans (strain WP3 / JCM 13877) protein is tRNA 2-selenouridine synthase.